A 122-amino-acid chain; its full sequence is Large ribosomal subunit protein uL14c (122 aa).

It belongs to the universal ribosomal protein uL14 family. Part of the 50S ribosomal subunit.

It is found in the plastid. It localises to the chloroplast. In terms of biological role, binds to 23S rRNA. This chain is Large ribosomal subunit protein uL14c, found in Fagopyrum esculentum subsp. ancestrale (Wild buckwheat).